Here is a 141-residue protein sequence, read N- to C-terminus: Protein stum homolog (141 aa).

Ser26 carries the post-translational modification Phosphoserine. The next 2 helical transmembrane spans lie at 51 to 71 (FPVAVICLFLNTFVPGLGTFV) and 87 to 107 (RHVCCVFWLNIAAALIQILTA).

The protein belongs to the SPEC3 family. Stum subfamily.

It is found in the membrane. The protein is Protein stum homolog of Homo sapiens (Human).